The sequence spans 174 residues: Acetolactate synthase small subunit (174 aa).

The ACT domain maps to 4-78 (TLSVLVQDEA…NILNVQDVTN (75 aa)).

The protein belongs to the acetolactate synthase small subunit family. In terms of assembly, dimer of large and small chains.

Its subcellular location is the plastid. The protein resides in the chloroplast. The catalysed reaction is 2 pyruvate + H(+) = (2S)-2-acetolactate + CO2. It participates in amino-acid biosynthesis; L-isoleucine biosynthesis; L-isoleucine from 2-oxobutanoate: step 1/4. Its pathway is amino-acid biosynthesis; L-valine biosynthesis; L-valine from pyruvate: step 1/4. The sequence is that of Acetolactate synthase small subunit (ilvH) from Porphyra purpurea (Red seaweed).